The chain runs to 31 residues: Palustrin-2c (31 aa).

Cysteines 23 and 29 form a disulfide.

In terms of tissue distribution, expressed by the skin glands.

Its subcellular location is the secreted. Antimicrobial activity against Gram-negative bacterium E.coli. In Lithobates palustris (Pickerel frog), this protein is Palustrin-2c.